The chain runs to 492 residues: Probable sphingolipid transporter spinster homolog 1 (492 aa).

The chain crosses the membrane as a helical span at residues 29 to 49 (FVTILCIINLINYVDRGVIAS). N-linked (GlcNAc...) asparagine glycans are attached at residues Asn-53 and Asn-76. 7 helical membrane-spanning segments follow: residues 83 to 103 (GLLSSAFMVGLLVASPIFAGL), 119 to 139 (VWTIAVIGCGFSYNFWMIAVF), 141 to 161 (MFVGVGEASFISLAAPYIDDS), 169 to 189 (FWLGLFYMCIPAGVALGYVFG), 200 to 220 (WAFYIEAIAMAVFVILSFCIK), 279 to 299 (VFIVNVLGYITYNFVIGAYSY), and 317 to 337 (IFGGLTIICGIIGTLGGSYVL). Asn-341 carries N-linked (GlcNAc...) asparagine glycosylation. A run of 4 helical transmembrane segments spans residues 348–368 (FKLLAASTLLGAAFCFTAFLM), 372–392 (YAFIALFAVGEILIFAPQAPV), 407–427 (LSMASSTVLIHILGDVPSSPL), and 442–462 (TLIITSILFLAAIIWGIGIFM). Phosphoserine is present on Ser-472. A compositionally biased stretch (acidic residues) spans 472–481 (SEDDEVEEDK). The tract at residues 472–492 (SEDDEVEEDKLESKTENSTLA) is disordered. Asn-488 carries an N-linked (GlcNAc...) asparagine glycan.

The protein belongs to the major facilitator superfamily. Spinster (TC 2.A.1.49) family.

It is found in the late endosome membrane. Its subcellular location is the lysosome membrane. Functionally, probable sphingolipid transporter that plays a central role in endosomes and/or lysosomes storage. The protein is Probable sphingolipid transporter spinster homolog 1 of Arabidopsis thaliana (Mouse-ear cress).